The following is a 163-amino-acid chain: Aspartate carbamoyltransferase regulatory chain (163 aa).

Positions 113, 118, 143, and 146 each coordinate Zn(2+).

This sequence belongs to the PyrI family. Contains catalytic and regulatory chains. Zn(2+) serves as cofactor.

Its function is as follows. Involved in allosteric regulation of aspartate carbamoyltransferase. The polypeptide is Aspartate carbamoyltransferase regulatory chain (Caldivirga maquilingensis (strain ATCC 700844 / DSM 13496 / JCM 10307 / IC-167)).